Here is a 299-residue protein sequence, read N- to C-terminus: Zeta-sarcoglycan (299 aa).

Residues 1-37 (MTREQYILATQQNNLPRTENAQLYPVGIYGWRKRCLY) lie on the Cytoplasmic side of the membrane. A helical; Signal-anchor for type II membrane protein membrane pass occupies residues 38 to 58 (FFVLLLLVTMIVNLAMTIWIL). At 59 to 299 (KVMNFTVDGM…QSSSNICLWS (241 aa)) the chain is on the extracellular side. N-linked (GlcNAc...) asparagine glycans are attached at residues Asn62 and Asn110. Cys273 and Cys289 are joined by a disulfide.

This sequence belongs to the sarcoglycan beta/delta/gamma/zeta family.

It is found in the cell membrane. The protein localises to the sarcolemma. It localises to the cytoplasm. Its subcellular location is the cytoskeleton. Functionally, component of the sarcoglycan complex, a subcomplex of the dystrophin-glycoprotein complex which forms a link between the F-actin cytoskeleton and the extracellular matrix. May play a role in the maintenance of striated muscle membrane stability. The protein is Zeta-sarcoglycan (SGCZ) of Homo sapiens (Human).